The chain runs to 527 residues: Peptide chain release factor 3 (527 aa).

The 269-residue stretch at 9 to 277 (AKRRTFAIIS…AVVDWAPRPL (269 aa)) folds into the tr-type G domain. Residues 18–25 (SHPDAGKT), 86–90 (DTPGH), and 140–143 (NKLD) contribute to the GTP site.

Belongs to the TRAFAC class translation factor GTPase superfamily. Classic translation factor GTPase family. PrfC subfamily.

It localises to the cytoplasm. Its function is as follows. Increases the formation of ribosomal termination complexes and stimulates activities of RF-1 and RF-2. It binds guanine nucleotides and has strong preference for UGA stop codons. It may interact directly with the ribosome. The stimulation of RF-1 and RF-2 is significantly reduced by GTP and GDP, but not by GMP. The sequence is that of Peptide chain release factor 3 from Pseudomonas fluorescens (strain Pf0-1).